We begin with the raw amino-acid sequence, 100 residues long: Large ribosomal subunit protein uL23 (100 aa).

It belongs to the universal ribosomal protein uL23 family. Part of the 50S ribosomal subunit. Contacts protein L29, and trigger factor when it is bound to the ribosome.

In terms of biological role, one of the early assembly proteins it binds 23S rRNA. One of the proteins that surrounds the polypeptide exit tunnel on the outside of the ribosome. Forms the main docking site for trigger factor binding to the ribosome. The protein is Large ribosomal subunit protein uL23 of Vibrio vulnificus (strain CMCP6).